The primary structure comprises 312 residues: 1-phosphofructokinase (312 aa).

ATP contacts are provided by residues 223 to 228 and 254 to 255; these read SLGAEG and GD. Asp-255 functions as the Proton acceptor in the catalytic mechanism.

Belongs to the carbohydrate kinase PfkB family.

It catalyses the reaction beta-D-fructose 1-phosphate + ATP = beta-D-fructose 1,6-bisphosphate + ADP + H(+). Catalyzes the ATP-dependent phosphorylation of fructose-l-phosphate to fructose-l,6-bisphosphate. The protein is 1-phosphofructokinase (fruK) of Escherichia coli O157:H7.